We begin with the raw amino-acid sequence, 657 residues long: 9-cis-epoxycarotenoid dioxygenase NCED9, chloroplastic (657 aa).

Residues His-357, His-406, His-471, and His-642 each contribute to the Fe cation site.

The protein belongs to the carotenoid oxygenase family. Requires Fe(2+) as cofactor. Expressed in developing siliques, embryo and endosperm.

The protein resides in the plastid. The protein localises to the chloroplast stroma. The catalysed reaction is a 9-cis-epoxycarotenoid + O2 = a 12'-apo-carotenal + 2-cis,4-trans-xanthoxin. The enzyme catalyses 9-cis-violaxanthin + O2 = (3S,5R,6S)-5,6-epoxy-3-hydroxy-5,6-dihydro-12'-apo-beta-caroten-12'-al + 2-cis,4-trans-xanthoxin. It carries out the reaction 9'-cis-neoxanthin + O2 = (3S,5R,6R)-3,5-dihydroxy-6,7-didehydro-5,6-dihydro-12'-apo-beta-caroten-12'-al + 2-cis,4-trans-xanthoxin. Has a 11,12(11',12') 9-cis epoxycarotenoid cleavage activity. Catalyzes the first step of abscisic-acid biosynthesis from carotenoids. Contributes probably to abscisic acid synthesis for the induction of seed dormancy. This chain is 9-cis-epoxycarotenoid dioxygenase NCED9, chloroplastic (NCED9), found in Arabidopsis thaliana (Mouse-ear cress).